The chain runs to 197 residues: 3-isopropylmalate dehydratase small subunit (197 aa).

The protein belongs to the LeuD family. LeuD type 1 subfamily. As to quaternary structure, heterodimer of LeuC and LeuD.

It catalyses the reaction (2R,3S)-3-isopropylmalate = (2S)-2-isopropylmalate. The protein operates within amino-acid biosynthesis; L-leucine biosynthesis; L-leucine from 3-methyl-2-oxobutanoate: step 2/4. In terms of biological role, catalyzes the isomerization between 2-isopropylmalate and 3-isopropylmalate, via the formation of 2-isopropylmaleate. The polypeptide is 3-isopropylmalate dehydratase small subunit (Corynebacterium glutamicum (strain R)).